Here is a 113-residue protein sequence, read N- to C-terminus: Photosystem II reaction center Psb28 protein (113 aa).

It belongs to the Psb28 family. As to quaternary structure, part of the photosystem II complex.

It is found in the cellular thylakoid membrane. The protein is Photosystem II reaction center Psb28 protein of Prochlorococcus marinus (strain NATL1A).